An 83-amino-acid chain; its full sequence is MPVIESAIQRVRLTKKQHDRNEPQASAYRTAVKRFEKAAAAGEDNLAELYKIASSAIDRAHSKGLIKKNKASREKSRLAKYVK.

Belongs to the bacterial ribosomal protein bS20 family.

Functionally, binds directly to 16S ribosomal RNA. This Leuconostoc citreum (strain KM20) protein is Small ribosomal subunit protein bS20.